A 182-amino-acid polypeptide reads, in one-letter code: MPVAALIREEIEIPANVNVEINGNTVAVKSGAKELKRDLLYPGIEISTEDGKVVIECTFPRKAQTAIVGTYRSHIQNMIKGVTDGFEYKLVIRYAHFPMKVSAKGNTVMIDNFLGEKYTRTAKIMDGVTVKVSGEEVIVSGANKEFVGQTAANIEQATKVKGRDTRIFQDGIYIVEKAGKVL.

This sequence belongs to the universal ribosomal protein uL6 family. Part of the 50S ribosomal subunit.

Functionally, this protein binds to the 23S rRNA, and is important in its secondary structure. It is located near the subunit interface in the base of the L7/L12 stalk, and near the tRNA binding site of the peptidyltransferase center. This is Large ribosomal subunit protein uL6 from Methanococcus maripaludis (strain C6 / ATCC BAA-1332).